A 131-amino-acid polypeptide reads, in one-letter code: Fluoride-specific ion channel FluC 2 (131 aa).

Helical transmembrane passes span 4–24 (IIQG…ARFW), 46–66 (VSGA…HGVF), 71–91 (PWLF…SFAL), and 105–125 (AISN…LGFA). Residues Gly-81 and Thr-84 each coordinate Na(+).

It belongs to the fluoride channel Fluc/FEX (TC 1.A.43) family.

Its subcellular location is the cell inner membrane. It catalyses the reaction fluoride(in) = fluoride(out). Na(+) is not transported, but it plays an essential structural role and its presence is essential for fluoride channel function. Its function is as follows. Fluoride-specific ion channel. Important for reducing fluoride concentration in the cell, thus reducing its toxicity. This is Fluoride-specific ion channel FluC 2 from Rhodopseudomonas palustris (strain BisB18).